The sequence spans 778 residues: Endonuclease MutS2 (778 aa).

An ATP-binding site is contributed by 328-335 (GPNTGGKT). Residues 702–777 (LDLRGKRYEE…GSGATIVTFK (76 aa)) enclose the Smr domain.

It belongs to the DNA mismatch repair MutS family. MutS2 subfamily. In terms of assembly, homodimer. Binds to stalled ribosomes, contacting rRNA.

Endonuclease that is involved in the suppression of homologous recombination and thus may have a key role in the control of bacterial genetic diversity. Functionally, acts as a ribosome collision sensor, splitting the ribosome into its 2 subunits. Detects stalled/collided 70S ribosomes which it binds and splits by an ATP-hydrolysis driven conformational change. Acts upstream of the ribosome quality control system (RQC), a ribosome-associated complex that mediates the extraction of incompletely synthesized nascent chains from stalled ribosomes and their subsequent degradation. Probably generates substrates for RQC. This chain is Endonuclease MutS2, found in Streptococcus pneumoniae serotype 2 (strain D39 / NCTC 7466).